The chain runs to 694 residues: Transcription activator of gluconeogenesis Pc22g08580 (694 aa).

The segment at 1-61 (MNMETKNGSP…DPSRPRRKKA (61 aa)) is disordered. Basic and acidic residues predominate over residues 17 to 55 (SGERDSADITEHEQMDVKPKTNGDSKADRKAANAKDPSR). The segment at residues 65 to 93 (CFACQRAHLTCGDERPCQRCIKRGLQDAC) is a DNA-binding region (zn(2)-C6 fungal-type). Disordered stretches follow at residues 126–240 (TLRN…GPFF), 276–300 (AAGD…AQFS), and 552–582 (TGGS…GTGR). A compositionally biased stretch (polar residues) spans 132–141 (PISRNGTNAV). The span at 142-171 (NSNQQHSQQHPQQPTNPTNNNFYPTPQTQT) shows a compositional bias: low complexity. Composition is skewed to polar residues over residues 172–234 (GSYN…SQNP), 281–300 (PTDS…AQFS), and 552–581 (TGGS…SGTG).

Belongs to the ERT1/acuK family.

It localises to the nucleus. Transcription factor which regulates nonfermentable carbon utilization. Activator of gluconeogenetic genes. The chain is Transcription activator of gluconeogenesis Pc22g08580 from Penicillium rubens (strain ATCC 28089 / DSM 1075 / NRRL 1951 / Wisconsin 54-1255) (Penicillium chrysogenum).